A 117-amino-acid chain; its full sequence is Immunoglobulin heavy variable 3-48 (117 aa).

The N-terminal stretch at 1 to 19 (MELGLCWVFLVAILEGVQC) is a signal peptide. A framework-1 region spans residues 20–44 (EVQLVESGGGLVQPGGSLRLSCAAS). An Ig-like domain is found at 20–117 (EVQLVESGGG…EDTAVYYCAR (98 aa)). Cysteines 41 and 115 form a disulfide. The interval 45-52 (GFTFSSYE) is complementarity-determining-1. Residues 53 to 69 (MNWVRQAPGKGLEWVSY) are framework-2. The segment at 70–77 (ISSSGSTI) is complementarity-determining-2. Residues 78-115 (YYADSVKGRFTISRDNAKNSLYLQMNSLRAEDTAVYYC) form a framework-3 region. Residues 116–117 (AR) form a complementarity-determining-3 region.

In terms of assembly, immunoglobulins are composed of two identical heavy chains and two identical light chains; disulfide-linked. In terms of processing, the N-terminus is blocked.

It is found in the secreted. The protein localises to the cell membrane. Functionally, v region of the variable domain of immunoglobulin heavy chains that participates in the antigen recognition. Immunoglobulins, also known as antibodies, are membrane-bound or secreted glycoproteins produced by B lymphocytes. In the recognition phase of humoral immunity, the membrane-bound immunoglobulins serve as receptors which, upon binding of a specific antigen, trigger the clonal expansion and differentiation of B lymphocytes into immunoglobulins-secreting plasma cells. Secreted immunoglobulins mediate the effector phase of humoral immunity, which results in the elimination of bound antigens. The antigen binding site is formed by the variable domain of one heavy chain, together with that of its associated light chain. Thus, each immunoglobulin has two antigen binding sites with remarkable affinity for a particular antigen. The variable domains are assembled by a process called V-(D)-J rearrangement and can then be subjected to somatic hypermutations which, after exposure to antigen and selection, allow affinity maturation for a particular antigen. The chain is Immunoglobulin heavy variable 3-48 from Homo sapiens (Human).